The following is a 141-amino-acid chain: Acetyltransferase YpeA (141 aa).

The N-acetyltransferase domain maps to 1-141 (MEIRVFRQED…GKRLIEDEEY (141 aa)).

The protein belongs to the acetyltransferase family. YpeA subfamily.

The sequence is that of Acetyltransferase YpeA (ypeA) from Escherichia coli (strain K12).